The sequence spans 599 residues: Sulfite reductase [NADPH] flavoprotein alpha-component (599 aa).

Positions 64-202 (VTLISASQTG…AASEWRACVV (139 aa)) constitute a Flavodoxin-like domain. Residues 70–75 (SQTGNA), 117–120 (STQG), and 153–162 (LGDTSYEFFC) contribute to the FMN site. The FAD-binding FR-type domain occupies 234-448 (DAPLTATLSV…IEHNDNFRLP (215 aa)). Residues T322, A356, 386–389 (RLYS), 404–406 (TVG), Y410, and 419–422 (GGAS) each bind FAD. Residues 519–520 (SR), 525–529 (KIYVQ), and D561 contribute to the NADP(+) site. An FAD-binding site is contributed by Y599.

It belongs to the NADPH-dependent sulphite reductase flavoprotein subunit CysJ family. In the N-terminal section; belongs to the flavodoxin family. This sequence in the C-terminal section; belongs to the flavoprotein pyridine nucleotide cytochrome reductase family. Alpha(8)-beta(8). The alpha component is a flavoprotein, the beta component is a hemoprotein. The cofactor is FAD. It depends on FMN as a cofactor.

The enzyme catalyses hydrogen sulfide + 3 NADP(+) + 3 H2O = sulfite + 3 NADPH + 4 H(+). It functions in the pathway sulfur metabolism; hydrogen sulfide biosynthesis; hydrogen sulfide from sulfite (NADPH route): step 1/1. In terms of biological role, component of the sulfite reductase complex that catalyzes the 6-electron reduction of sulfite to sulfide. This is one of several activities required for the biosynthesis of L-cysteine from sulfate. The flavoprotein component catalyzes the electron flow from NADPH -&gt; FAD -&gt; FMN to the hemoprotein component. The sequence is that of Sulfite reductase [NADPH] flavoprotein alpha-component from Salmonella typhi.